A 594-amino-acid chain; its full sequence is Putative diflavin flavoprotein A 4 (594 aa).

A zinc metallo-hydrolase region spans residues 57–250 (RRGTTSNSYL…LTLKMIAPGH (194 aa)). The region spanning 279 to 417 (VALIYASAYG…VCTTSGANFA (139 aa)) is the Flavodoxin-like domain. A flavodoxin-reductase-like region spans residues 445 to 594 (VGRIIGSIGV…IRHRKSGGQY (150 aa)).

This sequence in the N-terminal section; belongs to the zinc metallo-hydrolase group 3 family. It in the C-terminal section; belongs to the flavodoxin reductase family. The cofactor is Fe cation.

Functionally, mediates electron transfer from NADH to oxygen, reducing it to water. This modular protein has 3 redox cofactors, in other organisms the same activity requires 2 or 3 proteins. This is Putative diflavin flavoprotein A 4 (dfa4) from Synechocystis sp. (strain ATCC 27184 / PCC 6803 / Kazusa).